The primary structure comprises 1510 residues: ABC transporter C family MRP4 (1510 aa).

Helical transmembrane passes span 12–32 (EAVAATAHAALLALAALLLLL), 55–75 (PAVVVGDGAGGALAAATAGAW), 78–98 (AVLASCAYALLSQVAVLSYEV), 109–129 (ALLLPAVQAVSWAALLALALQ), 138–158 (FPALVRLWWVVSFALCVVIAY), 177–197 (MVANFASVPALGFLCLVGVMG), 319–339 (TFAAVNTIVSYVGPYLISYFV), 342–362 (LSGNIAFPHEGYILASIFFVA), 373–393 (WYLGVDIMGIHVKSGLTAMVY), 427–447 (AWYFHDIWMLPLQIILALAIL), 453–473 (IAMVSTLVATVLSIAASVPVA), and 540–560 (FVFWSSPIFVAVITFGTCILL). The region spanning 320–595 (FAAVNTIVSY…FPDLISMMAQ (276 aa)) is the ABC transmembrane type-1 1 domain. Residues 629–852 (VDIKDGAFSW…GTDFNALVSA (224 aa)) form the ABC transporter 1 domain. 664–671 (GVIGSGKS) serves as a coordination point for ATP. The segment at 889-925 (LKNKMCENGQPSNTRGIKEKKKKEERKKKRTVQEEER) is disordered. Over residues 906–918 (KEKKKKEERKKKR) the composition is skewed to basic residues. The next 6 membrane-spanning stretches (helical) occupy residues 945 to 965 (GTLIPLIILAQTMFQVLQIAS), 985 to 1005 (SVVLLVVYMSLAFGSSLFVFM), 1060 to 1082 (IAFRLGGFASTTIQLLGIVAVMS), 1086 to 1108 (WQVLILIVPMAVACMWMQRYYIA), 1154 to 1174 (LLDCFARPLFSSLAAIEWLCL), and 1179 to 1199 (LSTFVFAFCMAILVSFPPGTI). The 271-residue stretch at 950 to 1220 (LIILAQTMFQ…GLNLNARMSR (271 aa)) folds into the ABC transmembrane type-1 2 domain. Residues 1267 to 1501 (IELIDLKVRY…KSSMFIQLVS (235 aa)) enclose the ABC transporter 2 domain. 1301 to 1308 (GRTGSGKS) is a binding site for ATP.

This sequence belongs to the ABC transporter superfamily. ABCC family. Conjugate transporter (TC 3.A.1.208) subfamily. Expressed in roots, leaves, stalks, tassels, silks, developing seeds and developing embryos.

Its subcellular location is the membrane. ABC transporter that may affect phytic acid transport and compartmentalization. May function directly or indirectly in removing phytic acid from the cytosol or in vesicle trafficking. Required for phytic acid accumulation in developing seeds. Phytic acid is the primary storage form of phosphorus in cereal grains and other plant seeds. In Zea mays (Maize), this protein is ABC transporter C family MRP4.